We begin with the raw amino-acid sequence, 65 residues long: MSTHSTFFNRLYSIFLIFSIISELSSIGSCILSESVTCLNNSLMSFLIQSNSLLNSLIVCRPLSS.

This is an uncharacterized protein from Homo sapiens (Human).